Here is a 684-residue protein sequence, read N- to C-terminus: MEANHSEQLSAERQSTPPGDSSSLPSHNGLEKEDGQDSPTPVQPPEKEASVHPDISEELNRQLEDIINTYGSAASTAGKEGSARASEQPENAESPDNEDGDCEETTEEAGREPVASGEPPTVKEPVSNKEQKLEKKILKGLGKEANLLMQNLNKLQTPEEKFDFLFKKYAELLDEHRTEQKKLKLLQKKQVQIQKEKDQLQGEHSRAILARSKLESLCRELQRHNKTLKEEALQRAREEEEKRKEITSHFQSTLTDIQGQIEQQSERNMKLCQENTELAEKLKSIIDQYELREEHLDKIFKHRELQQKLVDAKLEQAQEMMKEAEERHKREKEYLLNQAAEWKLQAKVLKEQETVLQAQLTLYSGRFEEFQSTLTKSNEVFATFKQEMDKTTKKMKKLEKDTATWKARFENCNKALLDMIEEKALRAKEYECFVMKIGRLENLCRALQEERNELHKKIRDAEISEKDDQSQHNSDEEPESNVSVDQEIDAEEVNSVQTAVKNLATAFMIIHHPESTPHQSKETQPEIGSSQESADAALKEPEQPPLIPSRDSESPLPPLTPQAEAEGGSDAEPPSKASNSPAGLGAETQCEGLPVGAQADQASWKPEAEASGQAPQAPTEASLQKMEADVPAPACAAEEHVAAMVPACEPSRQPPRAAAEELPVGASAGPQPRNVADTNLEGVD.

A compositionally biased stretch (polar residues) spans 1 to 26 (MEANHSEQLSAERQSTPPGDSSSLPS). Residues 1 to 132 (MEANHSEQLS…KEPVSNKEQK (132 aa)) are disordered. Residues 45–64 (PEKEASVHPDISEELNRQLE) are compositionally biased toward basic and acidic residues. Residues 93–107 (ESPDNEDGDCEETTE) show a composition bias toward acidic residues. Coiled coils occupy residues 135–351 (KKIL…VLKE) and 378–467 (NEVF…SEKD). The span at 458-475 (IRDAEISEKDDQSQHNSD) shows a compositional bias: basic and acidic residues. Disordered regions lie at residues 458–485 (IRDA…VSVD), 514–632 (ESTP…DVPA), and 646–684 (PACE…EGVD). Phosphoserine is present on residues Ser-474 and Ser-483. Over residues 514–524 (ESTPHQSKETQ) the composition is skewed to basic and acidic residues. Over residues 613–622 (QAPQAPTEAS) the composition is skewed to polar residues.

The protein belongs to the taxilin family. In terms of assembly, binds to the C-terminal coiled coil region of syntaxin family members STX1A, STX3A and STX4A. Has a preference for STX1A. In terms of tissue distribution, expressed in skeletal muscle.

Functionally, promotes motor nerve regeneration. May be involved in intracellular vesicle traffic. This chain is Beta-taxilin (TXLNB), found in Homo sapiens (Human).